A 187-amino-acid polypeptide reads, in one-letter code: Ubiquinone biosynthesis protein COQ4 homolog, mitochondrial (187 aa).

Residues His-77, Asp-78, His-81, and Glu-93 each contribute to the Zn(2+) site.

This sequence belongs to the COQ4 family. In terms of assembly, component of a multi-subunit COQ enzyme complex. It depends on Zn(2+) as a cofactor.

It localises to the mitochondrion inner membrane. It carries out the reaction a 4-hydroxy-3-methoxy-5-(all-trans-polyprenyl)benzoate + H(+) = a 2-methoxy-6-(all-trans-polyprenyl)phenol + CO2. The protein operates within cofactor biosynthesis; ubiquinone biosynthesis. Lyase that catalyzes the C1-decarboxylation of 4-hydroxy-3-methoxy-5-(all-trans-polyprenyl)benzoic acid into 2-methoxy-6-(all-trans-polyprenyl)phenol during ubiquinone biosynthesis. This is Ubiquinone biosynthesis protein COQ4 homolog, mitochondrial from Leishmania infantum.